The chain runs to 492 residues: Protein adenylyltransferase Fic (492 aa).

Low complexity predominate over residues 1-17; the sequence is MCMEAEPPSPPAQQQEQ. Residues 1–21 are disordered; that stretch reads MCMEAEPPSPPAQQQEQVNPP. Residues 33–55 traverse the membrane as a helical segment; it reads LYRLVLLFVAGSLAAWTFHALSS. 2 TPR repeats span residues 118 to 151 and 152 to 186; these read ALGALRMAQDLYLAGKDDKAARLFEHALALAPRH and PEVLLRYGEFLEHNQRNIVLADQYYFQALTISPSN. The Inhibitory (S/T)XXXE(G/N) motif motif lies at 243 to 248; the sequence is SVGIEG. ATP-binding positions include Glu247 and 328–331; that span reads VGGH. In terms of domain architecture, Fido spans 297–432; the sequence is ITIKDILELH…IRPFVRFIAD (136 aa). His375 is a catalytic residue. Residues 379 to 386, 411 to 412, and Asn419 each bind ATP; these read DGNGRTSR and YY.

It belongs to the fic family. Homodimer.

It localises to the membrane. The enzyme catalyses L-tyrosyl-[protein] + ATP = O-(5'-adenylyl)-L-tyrosyl-[protein] + diphosphate. It carries out the reaction L-threonyl-[protein] + ATP = 3-O-(5'-adenylyl)-L-threonyl-[protein] + diphosphate. It catalyses the reaction 3-O-(5'-adenylyl)-L-threonyl-[protein] + H2O = L-threonyl-[protein] + AMP + H(+). With respect to regulation, the side chain of Glu-247 determines which of the two opposing activities (AMPylase or de-AMPylase) will take place. In response to endoplasmic reticulum stress, mediates de-AMPylase activity. Adenylyltransferase activity is inhibited by the inhibitory helix present at the N-terminus: Glu-247 binds ATP and competes with ATP-binding at Arg-386, thereby preventing adenylyltransferase activity. In unstressed cells, disengagement of Glu-247 promotes adenylyltransferase activity. Activation dissociates ATP-binding from Glu-247, allowing ordered binding of the entire ATP moiety with the alpha-phosphate in an orientation that is productive for accepting an incoming target hydroxyl side chain. Protein that can both mediate the addition of adenosine 5'-monophosphate (AMP) to specific residues of target proteins (AMPylation), and the removal of the same modification from target proteins (de-AMPylation), depending on the context. The side chain of Glu-247 determines which of the two opposing activities (AMPylase or de-AMPylase) will take place. Acts as a key regulator of the unfolded protein response (UPR) by mediating AMPylation or de-AMPylation of Hsc70-3/BiP. In unstressed cells, acts as an adenylyltransferase by mediating AMPylation of Hsc70-3/BiP at 'Thr-518', thereby inactivating it. In response to endoplasmic reticulum stress, acts as a phosphodiesterase by mediating removal of ATP (de-AMPylation) from Hsc70-3/BiP at 'Thr-518', leading to restore HSPA5/BiP activity. This is Protein adenylyltransferase Fic from Drosophila simulans (Fruit fly).